A 236-amino-acid chain; its full sequence is Aspartate/glutamate leucyltransferase (236 aa).

This sequence belongs to the R-transferase family. Bpt subfamily.

The protein localises to the cytoplasm. The catalysed reaction is N-terminal L-glutamyl-[protein] + L-leucyl-tRNA(Leu) = N-terminal L-leucyl-L-glutamyl-[protein] + tRNA(Leu) + H(+). It catalyses the reaction N-terminal L-aspartyl-[protein] + L-leucyl-tRNA(Leu) = N-terminal L-leucyl-L-aspartyl-[protein] + tRNA(Leu) + H(+). In terms of biological role, functions in the N-end rule pathway of protein degradation where it conjugates Leu from its aminoacyl-tRNA to the N-termini of proteins containing an N-terminal aspartate or glutamate. This chain is Aspartate/glutamate leucyltransferase, found in Saccharophagus degradans (strain 2-40 / ATCC 43961 / DSM 17024).